Consider the following 212-residue polypeptide: Putative protein phosphatase 2C 53 (212 aa).

The PPM-type phosphatase domain occupies 1–208 (MEDRFSAITN…DDISVMLIPL (208 aa)). D199 is a Mn(2+) binding site.

It belongs to the PP2C family. It depends on Mg(2+) as a cofactor. Mn(2+) is required as a cofactor.

It catalyses the reaction O-phospho-L-seryl-[protein] + H2O = L-seryl-[protein] + phosphate. The catalysed reaction is O-phospho-L-threonyl-[protein] + H2O = L-threonyl-[protein] + phosphate. The sequence is that of Putative protein phosphatase 2C 53 from Arabidopsis thaliana (Mouse-ear cress).